Here is a 122-residue protein sequence, read N- to C-terminus: Autophagy-related protein 8e (122 aa).

G118 carries the Phosphatidylethanolamine amidated glycine lipid modification. The propeptide at 119–122 is removed in mature form; the sequence is ASSI.

The protein belongs to the ATG8 family. In terms of assembly, interacts with ATG4. Interacts with SH3P2. Interacts with ATG1A and ATG11. Binds to ATG1A and ATG11 on autophagic vesicles. The C-terminal 4 residues are removed by ATG4 to expose Gly-118 at the C-terminus. This Gly-118 forms then a thioester bond with the 'Cys-558' of ATG7 (E1-like activating enzyme) before being transferred to the 'Cys-258' of ATG3 (the specific E2 conjugating enzyme), in order to be finally amidated with phosphatidylethanolamine. This lipid modification anchors ATG8 to autophagosomes. As to expression, constitutively expressed.

The protein localises to the cytoplasmic vesicle. It is found in the autophagosome membrane. Its subcellular location is the vacuole membrane. It localises to the cytoplasm. The protein resides in the cytoskeleton. Ubiquitin-like modifier involved in autophagosomes formation. May mediate the delivery of the autophagosomes to the vacuole via the microtubule cytoskeleton. This is Autophagy-related protein 8e (ATG8E) from Arabidopsis thaliana (Mouse-ear cress).